A 565-amino-acid polypeptide reads, in one-letter code: Dihydroxy-acid dehydratase (565 aa).

Asp-83 lines the Mg(2+) pocket. Cys-124 lines the [2Fe-2S] cluster pocket. Mg(2+) contacts are provided by Asp-125 and Lys-126. Lys-126 is modified (N6-carboxylysine). Residue Cys-197 coordinates [2Fe-2S] cluster. Glu-451 serves as a coordination point for Mg(2+). Catalysis depends on Ser-477, which acts as the Proton acceptor.

Belongs to the IlvD/Edd family. In terms of assembly, homodimer. The cofactor is [2Fe-2S] cluster. It depends on Mg(2+) as a cofactor.

The catalysed reaction is (2R)-2,3-dihydroxy-3-methylbutanoate = 3-methyl-2-oxobutanoate + H2O. It carries out the reaction (2R,3R)-2,3-dihydroxy-3-methylpentanoate = (S)-3-methyl-2-oxopentanoate + H2O. It participates in amino-acid biosynthesis; L-isoleucine biosynthesis; L-isoleucine from 2-oxobutanoate: step 3/4. Its pathway is amino-acid biosynthesis; L-valine biosynthesis; L-valine from pyruvate: step 3/4. In terms of biological role, functions in the biosynthesis of branched-chain amino acids. Catalyzes the dehydration of (2R,3R)-2,3-dihydroxy-3-methylpentanoate (2,3-dihydroxy-3-methylvalerate) into 2-oxo-3-methylpentanoate (2-oxo-3-methylvalerate) and of (2R)-2,3-dihydroxy-3-methylbutanoate (2,3-dihydroxyisovalerate) into 2-oxo-3-methylbutanoate (2-oxoisovalerate), the penultimate precursor to L-isoleucine and L-valine, respectively. This Symbiobacterium thermophilum (strain DSM 24528 / JCM 14929 / IAM 14863 / T) protein is Dihydroxy-acid dehydratase.